A 379-amino-acid polypeptide reads, in one-letter code: Chaperone protein DnaJ (379 aa).

The region spanning E5–G69 is the J domain. Residues G141 to A223 form a CR-type zinc finger. Zn(2+)-binding residues include C154, C157, C171, C174, C197, C200, C211, and C214. CXXCXGXG motif repeat units lie at residues C154–G161, C171–G178, C197–G204, and C211–G218.

This sequence belongs to the DnaJ family. As to quaternary structure, homodimer. The cofactor is Zn(2+).

It localises to the cytoplasm. Functionally, participates actively in the response to hyperosmotic and heat shock by preventing the aggregation of stress-denatured proteins and by disaggregating proteins, also in an autonomous, DnaK-independent fashion. Unfolded proteins bind initially to DnaJ; upon interaction with the DnaJ-bound protein, DnaK hydrolyzes its bound ATP, resulting in the formation of a stable complex. GrpE releases ADP from DnaK; ATP binding to DnaK triggers the release of the substrate protein, thus completing the reaction cycle. Several rounds of ATP-dependent interactions between DnaJ, DnaK and GrpE are required for fully efficient folding. Also involved, together with DnaK and GrpE, in the DNA replication of plasmids through activation of initiation proteins. This chain is Chaperone protein DnaJ, found in Lactococcus lactis subsp. cremoris (strain SK11).